We begin with the raw amino-acid sequence, 387 residues long: MTVLKMTDLDLQGKRVLIREDLNVPVKDGVVSSDARILASLPTIRLALEKGAAVMVCSHLGRPTEGEFSAENSLKPVADYLSKALGRDVPLVADYLDGVDVKAGEVVLFENVRFNKGEKKNADELAQQYAALCDVFVMDAFGTAHRAEGSTHGVAKFAKVAAAGPLLAAELEALGKALGAPAQPMTAIVAGSKVSTKLDVLNSLSGICNQLIVGGGIANTFLAAAGHKVGKSLYEPDLLDTARAIAAKVSVPLPTDVVVAKEFAESAAATVKLIADVADDDMILDIGPQTAAHFAELLKSSGTILWNGPVGVFEFDQFGEGTKTLAKAIAESQAFSIAGGGDTLAAIDKYGVAQQISYISTGGGAFLEFVEGKVLPAVEVLEQRAKA.

Residues 21–23, arginine 36, 59–62, arginine 113, and arginine 146 contribute to the substrate site; these read DLN and HLGR. Residues lysine 197, glutamate 314, and 340–343 each bind ATP; that span reads GGDT.

This sequence belongs to the phosphoglycerate kinase family. In terms of assembly, monomer.

The protein resides in the cytoplasm. The catalysed reaction is (2R)-3-phosphoglycerate + ATP = (2R)-3-phospho-glyceroyl phosphate + ADP. It functions in the pathway carbohydrate degradation; glycolysis; pyruvate from D-glyceraldehyde 3-phosphate: step 2/5. This is Phosphoglycerate kinase from Pseudomonas syringae pv. syringae (strain B728a).